We begin with the raw amino-acid sequence, 355 residues long: Agamous-like MADS-box protein AGL81 (355 aa).

The tract at residues 1-22 (MAIRSLPSSSRCSSSSSSSSYS) is disordered. One can recognise an MADS-box domain in the interval 26 to 68 (TSLSNRLETIFKKASELCTLCDIEACVIYYGPDGELKTWPPER). Over residues 162-174 (VESQKHKETKPDH) the composition is skewed to basic and acidic residues. Residues 162 to 186 (VESQKHKETKPDHQSLASSSLNHQT) form a disordered region. Residues 176-186 (SLASSSLNHQT) show a composition bias toward polar residues.

As to quaternary structure, interacts with MEE14/CBP1.

It localises to the nucleus. In terms of biological role, probable transcription factor that may function in the maintenance of the proper function of the central cell in pollen tube attraction. In Arabidopsis thaliana (Mouse-ear cress), this protein is Agamous-like MADS-box protein AGL81.